The sequence spans 61 residues: Photosystem II reaction center protein Z (61 aa).

The next 2 membrane-spanning stretches (helical) occupy residues 8–28 (ALLV…VLFS) and 41–61 (LVGS…SFFK).

Belongs to the PsbZ family. PSII is composed of 1 copy each of membrane proteins PsbA, PsbB, PsbC, PsbD, PsbE, PsbF, PsbH, PsbI, PsbJ, PsbK, PsbL, PsbM, PsbT, PsbX, PsbY, PsbZ, Psb30/Ycf12, peripheral proteins PsbO, CyanoQ (PsbQ), PsbU, PsbV and a large number of cofactors. It forms dimeric complexes.

Its subcellular location is the cellular thylakoid membrane. Functionally, may control the interaction of photosystem II (PSII) cores with the light-harvesting antenna, regulates electron flow through the 2 photosystem reaction centers. PSII is a light-driven water plastoquinone oxidoreductase, using light energy to abstract electrons from H(2)O, generating a proton gradient subsequently used for ATP formation. The chain is Photosystem II reaction center protein Z from Synechococcus sp. (strain JA-3-3Ab) (Cyanobacteria bacterium Yellowstone A-Prime).